Consider the following 600-residue polypeptide: NADH-quinone oxidoreductase subunit C/D (600 aa).

The NADH dehydrogenase I subunit C stretch occupies residues 1 to 190; that stretch reads MVNNMTDLTA…SPFELTKAKQ (190 aa). Residues 214-600 are NADH dehydrogenase I subunit D; that stretch reads DFMFLNLGPN…IDFVMSDVDR (387 aa).

This sequence in the N-terminal section; belongs to the complex I 30 kDa subunit family. In the C-terminal section; belongs to the complex I 49 kDa subunit family. In terms of assembly, NDH-1 is composed of 13 different subunits. Subunits NuoB, CD, E, F, and G constitute the peripheral sector of the complex.

The protein resides in the cell inner membrane. It catalyses the reaction a quinone + NADH + 5 H(+)(in) = a quinol + NAD(+) + 4 H(+)(out). Its function is as follows. NDH-1 shuttles electrons from NADH, via FMN and iron-sulfur (Fe-S) centers, to quinones in the respiratory chain. The immediate electron acceptor for the enzyme in this species is believed to be ubiquinone. Couples the redox reaction to proton translocation (for every two electrons transferred, four hydrogen ions are translocated across the cytoplasmic membrane), and thus conserves the redox energy in a proton gradient. This Shigella boydii serotype 18 (strain CDC 3083-94 / BS512) protein is NADH-quinone oxidoreductase subunit C/D.